We begin with the raw amino-acid sequence, 491 residues long: Cytochrome P450 2H1 (491 aa).

Cysteine 436 is a binding site for heme.

This sequence belongs to the cytochrome P450 family. Heme serves as cofactor. Expressed in liver.

The protein localises to the endoplasmic reticulum membrane. The protein resides in the microsome membrane. The enzyme catalyses an organic molecule + reduced [NADPH--hemoprotein reductase] + O2 = an alcohol + oxidized [NADPH--hemoprotein reductase] + H2O + H(+). In terms of biological role, cytochromes P450 are a group of heme-thiolate monooxygenases. In liver microsomes, this enzyme is involved in an NADPH-dependent electron transport pathway. It oxidizes a variety of structurally unrelated compounds, including steroids, fatty acids, and xenobiotics. The sequence is that of Cytochrome P450 2H1 (CYP2H1) from Gallus gallus (Chicken).